Here is a 98-residue protein sequence, read N- to C-terminus: MALTKADLAENLFETLGYSKRDAKETVEVFFEEVRKALENGEQVKLSGFGNFDLREKNERPGRNPKTGEDIPISARRVVTFRPGQKLKARVENIKIEK.

The span at 53-69 (DLREKNERPGRNPKTGE) shows a compositional bias: basic and acidic residues. Residues 53-72 (DLREKNERPGRNPKTGEDIP) form a disordered region.

The protein belongs to the bacterial histone-like protein family. Heterodimer of an alpha and a beta chain.

Its function is as follows. This protein is one of the two subunits of integration host factor, a specific DNA-binding protein that functions in genetic recombination as well as in transcriptional and translational control. This is Integration host factor subunit alpha from Vibrio atlanticus (strain LGP32) (Vibrio splendidus (strain Mel32)).